A 126-amino-acid chain; its full sequence is Small ribosomal subunit protein uS13 (126 aa).

Positions 96-126 (LPVRGQQTKTNARTRKGRRKGTVANKKKVSK) are disordered. Residues 107 to 126 (ARTRKGRRKGTVANKKKVSK) show a composition bias toward basic residues.

It belongs to the universal ribosomal protein uS13 family. In terms of assembly, part of the 30S ribosomal subunit. Forms a loose heterodimer with protein S19. Forms two bridges to the 50S subunit in the 70S ribosome.

Functionally, located at the top of the head of the 30S subunit, it contacts several helices of the 16S rRNA. In the 70S ribosome it contacts the 23S rRNA (bridge B1a) and protein L5 of the 50S subunit (bridge B1b), connecting the 2 subunits; these bridges are implicated in subunit movement. Contacts the tRNAs in the A and P-sites. The protein is Small ribosomal subunit protein uS13 of Hydrogenobaculum sp. (strain Y04AAS1).